A 528-amino-acid polypeptide reads, in one-letter code: Na(+)/H(+) antiporter NhaB (528 aa).

Helical transmembrane passes span 10–30, 63–83, 96–116, 131–165, 204–224, 240–260, 305–325, 359–379, 391–411, 449–469, and 476–496; these read IGNFLGNSPKWYKIAILSFLI, YPLQPGGLLAIEAVAIGMTSA, VLLLLVFMVAGIYFMKQLLLF, VSLMFCLTSAFLSAFLDALTVIAVIIAVAVGFYAI, LLMHAGVGTALGGVCTMVGEP, FVVRMSPVTVPVLIAGILTCL, VLVGVWLIAGLALHLASVGLV, LAVFFAVVAVIIDQHLFAPVI, LVIFYIANGLLSMVSDNVFVG, ATPNGQAAFLFLLTSALAPLI, and MVWMALPYTIVLSVVGVLAIE.

It belongs to the NhaB Na(+)/H(+) (TC 2.A.34) antiporter family.

It is found in the cell inner membrane. It carries out the reaction 2 Na(+)(in) + 3 H(+)(out) = 2 Na(+)(out) + 3 H(+)(in). Functionally, na(+)/H(+) antiporter that extrudes sodium in exchange for external protons. The protein is Na(+)/H(+) antiporter NhaB of Shewanella sp. (strain W3-18-1).